The following is a 926-amino-acid chain: MSHHKKRVYPQAQAQYGQSATPLQQPAQLVPPQDPAAAGMSYAQMGMPPQGAAAPMGQPQFLTPAQEQLHQQIDQAATSMNDMHLHNVPLVDPNAYMQQQVPAQAGMPFQQQQQPLPAQVYGQPSAAMGQNMRPMNQLYPIDLLTELPPPITDLTLPPPPLVIPPEKMLVPSEVSNASPDYIRSTLNAVPKNSSLLKKSKLPFGLVIRPYQHLYDDIDPPPLNEDGLIVRCRRCRSYMNPFITFIEQGRRWRCNFCRLANDVPMQMDQTDPNDPKSRYDRNEIKCAVMEYMAPKEYTLRQPPPATYCFLVDVSQASIKSGLLATTINTLLQNLDSIPNHDERTRISILCVDNAIHYFKIPLDSDNNEGSTDQINMMDIADLEEPFLPRPNSMVVSLKACRQNIESLLTKIPQIFQSNLITSFALGPALKSAYHLIGGVGGKIIVVSGTLPNLGIGKLQRRNESGVVNTSKETAQLLSCQDSFYKNFTIDCSKVQITVDLFLASEDYMDVASLSNLSRFTAGQTHFYPGFSGKNPNDIVKFSTEFAKHISMDLCMETVMRARGSTGLRMSRFYGHFFNRSSDLCAFSTMPRDQSYLFEVNVDESIMTEYCYIQVAVLLSLNNSQRRIRIITLAMPTTESLAEVYASADQLAIASFYNSKAVEKALNSSLDEARVLINKSVQDILATYKKEIVVSNTAGGAPLRLCANLRMFPLLMHSLTKHMAFRSGIVPSDHRASALNILESLPLKYLIKNIYPDVYSLHDMADEAGLPLQTEDGETTATVVLPQPLNATSSLFERYGLYLIDNGNELFLWMGGDAVPALVFDVFGTQDIFDIPIGKQEIPVVENSEFNQRVRNIINQLRNHDDIITYQSLYIVRGASLSEPVNHASAREVATLRLWASSTLVEDKILNNESYREFLQIMKARISK.

Positions 1–54 (MSHHKKRVYPQAQAQYGQSATPLQQPAQLVPPQDPAAAGMSYAQMGMPPQGAAA) are disordered. Residues 20–54 (ATPLQQPAQLVPPQDPAAAGMSYAQMGMPPQGAAA) are compositionally biased toward low complexity. Zn(2+) contacts are provided by Cys-231, Cys-234, Cys-253, and Cys-256. Positions 231-256 (CRRCRSYMNPFITFIEQGRRWRCNFC) are zinc finger-like.

This sequence belongs to the SEC23/SEC24 family. SEC24 subfamily. As to quaternary structure, the COPII coat is composed of at least 5 proteins: the SEC23/24 complex, the SEC13/31 complex, and the protein SAR1. Golgi apparatus membrane; Peripheral membrane protein; Cytoplasmic side.

It localises to the cytoplasm. Its subcellular location is the cytoplasmic vesicle. It is found in the COPII-coated vesicle membrane. The protein localises to the endoplasmic reticulum membrane. The protein resides in the golgi apparatus membrane. In terms of biological role, component of the coat protein complex II (COPII) which promotes the formation of transport vesicles from the endoplasmic reticulum (ER). The coat has two main functions, the physical deformation of the endoplasmic reticulum membrane into vesicles and the selection of cargo molecules. In Saccharomyces uvarum (strain ATCC 76518 / CBS 7001 / CLIB 283 / NBRC 10550 / MCYC 623 / NCYC 2669 / NRRL Y-11845) (Yeast), this protein is Protein transport protein SEC24-2 (SEC242).